The primary structure comprises 431 residues: Lipid storage droplets surface-binding protein 1 (431 aa).

The segment at 397 to 431 (KVTGSDGGNSNHRSSRRRQDPNHYSATHNNINGVY) is disordered. The span at 418-431 (NHYSATHNNINGVY) shows a compositional bias: polar residues.

It belongs to the perilipin family.

The protein localises to the cytoplasm. It localises to the lipid droplet. Its function is as follows. Required for normal deposition of neutral lipids in the oocyte. In Drosophila melanogaster (Fruit fly), this protein is Lipid storage droplets surface-binding protein 1.